Here is a 472-residue protein sequence, read N- to C-terminus: FAD-dependent monooxygenase ltmM (472 aa).

Residues 7 to 27 (VIIVGGSVAGLSLAHCLEKIG) traverse the membrane as a helical segment. The FAD site is built by E34, G48, and R107. A glycan (N-linked (GlcNAc...) asparagine) is linked at N186. FAD is bound by residues D306 and A319. The chain crosses the membrane as a helical span at residues 450–470 (IVYALYLVAAAAFILYCLSSL).

This sequence belongs to the paxM FAD-dependent monooxygenase family. FAD serves as cofactor.

It is found in the membrane. The protein operates within secondary metabolite biosynthesis. FAD-dependent monooxygenase; part of the gene cluster that mediates the biosynthesis of lolitrems, indole-diterpene mycotoxins that are potent tremorgens in mammals, and are synthesized by clavicipitaceous fungal endophytes in association with their grass hosts. The geranylgeranyl diphosphate (GGPP) synthase ltmG is proposed to catalyze the first step in lolitrem biosynthesis. LtmG catalyzes a series of iterative condensations of isopentenyl diphosphate (IPP) with dimethylallyl diphosphate (DMAPP), geranyl diphosphate (GPP), and farnesyl diphosphate (FPP), to form GGPP. GGPP then condenses with indole-3-glycerol phosphate to form 3-geranylgeranylindole, an acyclic intermediate, to be incorporated into paxilline. Either ltmG or ltmC could be responsible for this step, as both are putative prenyl transferases. The FAD-dependent monooxygenase ltmM then catalyzes the epoxidation of the two terminal alkenes of the geranylgeranyl moiety, which is subsequently cyclized by ltmC, to paspaline. The cytochrome P450 monooxygenases ltmQ and ltmP can sequentially oxidize paspaline to terpendole E and terpendole F. Alternatively, ltmP converts paspaline to an intermediate which is oxidized by ltmQ to terpendole F. LtmF, ltmK, ltmE and ltmJ appear to be unique to the epichloe endophytes. The prenyltransferase ltmF is involved in the 27-hydroxyl-O-prenylation. The cytochrome P450 monooxygenase ltmK is required for the oxidative acetal ring formation. The multi-functional prenyltransferase ltmE is required for C20- and C21-prenylations of the indole ring of paspalanes and acts together with the cytochrome P450 monooxygenase ltmJ to yield lolitremanes by multiple oxidations and ring closures. The stereoisomer pairs of lolitriol and lolitrem N or lolitrem B and lolitrem F may be attributed to variations in the way in which ring closure can occur under the action of ltmJ. While the major product of this pathway is lolitrem B, the prenyl transferases and cytochrome P450 monooxygenases identified in this pathway have a remarkable versatility in their regio- and stereo-specificities to generate a diverse range of metabolites that are products of a metabolic grid rather than a linear pathway. This chain is FAD-dependent monooxygenase ltmM (ltmM), found in Epichloe festucae (strain Fl1).